Reading from the N-terminus, the 102-residue chain is Large ribosomal subunit protein bL21 (102 aa).

It belongs to the bacterial ribosomal protein bL21 family. Part of the 50S ribosomal subunit. Contacts protein L20.

This protein binds to 23S rRNA in the presence of protein L20. The chain is Large ribosomal subunit protein bL21 from Myxococcus xanthus (strain DK1622).